Here is a 217-residue protein sequence, read N- to C-terminus: Vacuolar protein-sorting-associated protein 37 homolog 1 (217 aa).

The disordered stretch occupies residues 1 to 49; sequence MFNFWGSKDQQQGQSRPQEASSQSPWYSPSLVSSPSSSRPQSSGQISAQ. A compositionally biased stretch (polar residues) spans 8 to 20; it reads KDQQQGQSRPQEA. Positions 21–47 are enriched in low complexity; the sequence is SSQSPWYSPSLVSSPSSSRPQSSGQIS. One can recognise a VPS37 C-terminal domain in the interval 137-217; sequence QEKLNELERQ…IHLAAKTSNI (81 aa).

The protein belongs to the VPS37 family. In terms of assembly, component of the endosomal sorting required for transport complex I (ESCRT-I), composed of ELC, VPS28 and VPS37. Interacts with ELC.

The protein localises to the endosome. Component of the ESCRT-I complex (endosomal sorting complex required for transport I), a regulator of vesicular trafficking process. Required for the sorting of endocytic ubiquitinated cargos into multivesicular bodies (MVBs). The protein is Vacuolar protein-sorting-associated protein 37 homolog 1 (VPS37-1) of Arabidopsis thaliana (Mouse-ear cress).